Consider the following 93-residue polypeptide: Acylphosphatase (93 aa).

The 88-residue stretch at 6 to 93 (RARIVVSGRV…GDLGAFEIRF (88 aa)) folds into the Acylphosphatase-like domain. Catalysis depends on residues Arg21 and Asn39.

It belongs to the acylphosphatase family.

The enzyme catalyses an acyl phosphate + H2O = a carboxylate + phosphate + H(+). The chain is Acylphosphatase (acyP) from Anaeromyxobacter dehalogenans (strain 2CP-C).